A 247-amino-acid chain; its full sequence is tRNA pseudouridine synthase A (247 aa).

The active-site Nucleophile is Asp-52. Tyr-111 lines the substrate pocket.

Belongs to the tRNA pseudouridine synthase TruA family. In terms of assembly, homodimer.

The catalysed reaction is uridine(38/39/40) in tRNA = pseudouridine(38/39/40) in tRNA. Functionally, formation of pseudouridine at positions 38, 39 and 40 in the anticodon stem and loop of transfer RNAs. This Caulobacter vibrioides (strain ATCC 19089 / CIP 103742 / CB 15) (Caulobacter crescentus) protein is tRNA pseudouridine synthase A.